A 142-amino-acid polypeptide reads, in one-letter code: Acetyltransferase SG1711 (142 aa).

The N-acetyltransferase domain maps to 1 to 142; that stretch reads MEIRVFRHDD…GKRLIEDQEY (142 aa).

This sequence belongs to the acetyltransferase family. YpeA subfamily.

The chain is Acetyltransferase SG1711 from Sodalis glossinidius (strain morsitans).